The primary structure comprises 337 residues: GTPase Obg (337 aa).

One can recognise an Obg domain in the interval 1–161 (MNLTDNAVIF…FKIKLDFVFL (161 aa)). The region spanning 162–333 (ADVGLFGYSN…LINKILLFLE (172 aa)) is the OBG-type G domain. GTP-binding positions include 168 to 175 (GYSNTGRS), 193 to 197 (FTTLF), 214 to 217 (DIPS), 282 to 285 (NKTD), and 314 to 316 (SLN). 2 residues coordinate Mg(2+): serine 175 and threonine 195.

The protein belongs to the TRAFAC class OBG-HflX-like GTPase superfamily. OBG GTPase family. Monomer. Requires Mg(2+) as cofactor.

The protein localises to the cytoplasm. In terms of biological role, an essential GTPase which binds GTP, GDP and possibly (p)ppGpp with moderate affinity, with high nucleotide exchange rates and a fairly low GTP hydrolysis rate. Plays a role in control of the cell cycle, stress response, ribosome biogenesis and in those bacteria that undergo differentiation, in morphogenesis control. This chain is GTPase Obg, found in Wigglesworthia glossinidia brevipalpis.